A 145-amino-acid chain; its full sequence is UPF0763 protein WS1752 (145 aa).

It belongs to the UPF0763 family.

The chain is UPF0763 protein WS1752 from Wolinella succinogenes (strain ATCC 29543 / DSM 1740 / CCUG 13145 / JCM 31913 / LMG 7466 / NCTC 11488 / FDC 602W) (Vibrio succinogenes).